The sequence spans 422 residues: uncharacterized protein (422 aa).

Ser124, Ser126, and Ser151 each carry phosphoserine. Positions 144 to 166 (TNSLNHDSPPSTPPRRPDTSTSK) are disordered. Lys250 participates in a covalent cross-link: Glycyl lysine isopeptide (Lys-Gly) (interchain with G-Cter in SUMO2). 2 disordered regions span residues 251–285 (ADTT…NDSS) and 299–324 (GRGP…ATTA). The segment covering 271–282 (ETDEDLAWDSDN) has biased composition (acidic residues). Ser280 and Ser306 each carry phosphoserine. Residues 310–324 (ALTVKAKATSSATTA) show a composition bias toward low complexity. Phosphoserine is present on Ser351.

This is an uncharacterized protein from Homo sapiens (Human).